The primary structure comprises 38 residues: Trypsin inhibitor 2 (38 aa).

At glutamine 1 the chain carries Pyrrolidone carboxylic acid.

Contains disulfide bonds.

Inhibits trypsin-like proteases from the guts of the insect pests P.truncatus, P.americana, Acheta sp and Gryllus sp. This chain is Trypsin inhibitor 2, found in Opuntia streptacantha (Prickly pear cactus).